A 488-amino-acid chain; its full sequence is Ribulose bisphosphate carboxylase large chain (488 aa).

Residues Asn127 and Thr177 each coordinate substrate. Residue Lys179 is the Proton acceptor of the active site. Lys181 serves as a coordination point for substrate. The Mg(2+) site is built by Lys205, Asp207, and Glu208. Lys205 is subject to N6-carboxylysine. The Proton acceptor role is filled by His297. Residues Arg298, His330, and Ser382 each contribute to the substrate site.

Belongs to the RuBisCO large chain family. Type I subfamily. In terms of assembly, heterohexadecamer of 8 large chains and 8 small chains. Mg(2+) is required as a cofactor.

Its subcellular location is the plastid. The protein resides in the chloroplast. The enzyme catalyses 2 (2R)-3-phosphoglycerate + 2 H(+) = D-ribulose 1,5-bisphosphate + CO2 + H2O. The catalysed reaction is D-ribulose 1,5-bisphosphate + O2 = 2-phosphoglycolate + (2R)-3-phosphoglycerate + 2 H(+). Its function is as follows. RuBisCO catalyzes two reactions: the carboxylation of D-ribulose 1,5-bisphosphate, the primary event in carbon dioxide fixation, as well as the oxidative fragmentation of the pentose substrate in the photorespiration process. Both reactions occur simultaneously and in competition at the same active site. The chain is Ribulose bisphosphate carboxylase large chain from Ectocarpus siliculosus (Brown alga).